A 312-amino-acid chain; its full sequence is Secreted RxLR effector protein 14 (312 aa).

The signal sequence occupies residues 1-20 (MHSFKLLLALIVAICTSCDA). Positions 46–61 (RLLRAKDGKVRADEER) match the RxLR-dEER motif.

It belongs to the RxLR effector family.

The protein localises to the secreted. Its subcellular location is the host nucleus. Functionally, secreted effector that completely suppresses the host cell death induced by cell death-inducing proteins. The sequence is that of Secreted RxLR effector protein 14 from Plasmopara viticola (Downy mildew of grapevine).